The sequence spans 195 residues: Imidazole glycerol phosphate synthase subunit HisH 2 (195 aa).

One can recognise a Glutamine amidotransferase type-1 domain in the interval 2 to 195 (KIIIIDTACA…LISNFIKDIG (194 aa)). Cysteine 77 (nucleophile) is an active-site residue. Catalysis depends on residues histidine 175 and glutamate 177.

In terms of assembly, heterodimer of HisH and HisF.

Its subcellular location is the cytoplasm. The catalysed reaction is 5-[(5-phospho-1-deoxy-D-ribulos-1-ylimino)methylamino]-1-(5-phospho-beta-D-ribosyl)imidazole-4-carboxamide + L-glutamine = D-erythro-1-(imidazol-4-yl)glycerol 3-phosphate + 5-amino-1-(5-phospho-beta-D-ribosyl)imidazole-4-carboxamide + L-glutamate + H(+). It carries out the reaction L-glutamine + H2O = L-glutamate + NH4(+). It functions in the pathway amino-acid biosynthesis; L-histidine biosynthesis; L-histidine from 5-phospho-alpha-D-ribose 1-diphosphate: step 5/9. IGPS catalyzes the conversion of PRFAR and glutamine to IGP, AICAR and glutamate. The HisH subunit provides the glutamine amidotransferase activity that produces the ammonia necessary to HisF for the synthesis of IGP and AICAR. The polypeptide is Imidazole glycerol phosphate synthase subunit HisH 2 (hisH2) (Campylobacter jejuni subsp. jejuni serotype O:2 (strain ATCC 700819 / NCTC 11168)).